Here is a 405-residue protein sequence, read N- to C-terminus: Imidazolonepropionase (405 aa).

Fe(3+)-binding residues include His73 and His75. 2 residues coordinate Zn(2+): His73 and His75. 4-imidazolone-5-propanoate contacts are provided by Arg82, Tyr145, and His178. Tyr145 is an N-formimidoyl-L-glutamate binding site. His243 lines the Fe(3+) pocket. His243 contacts Zn(2+). Gln246 contributes to the 4-imidazolone-5-propanoate binding site. Asp318 provides a ligand contact to Fe(3+). A Zn(2+)-binding site is contributed by Asp318. The N-formimidoyl-L-glutamate site is built by Asn320 and Gly322. Position 323 (Thr323) interacts with 4-imidazolone-5-propanoate.

Belongs to the metallo-dependent hydrolases superfamily. HutI family. The cofactor is Zn(2+). Fe(3+) serves as cofactor.

It localises to the cytoplasm. The enzyme catalyses 4-imidazolone-5-propanoate + H2O = N-formimidoyl-L-glutamate. Its pathway is amino-acid degradation; L-histidine degradation into L-glutamate; N-formimidoyl-L-glutamate from L-histidine: step 3/3. Catalyzes the hydrolytic cleavage of the carbon-nitrogen bond in imidazolone-5-propanoate to yield N-formimidoyl-L-glutamate. It is the third step in the universal histidine degradation pathway. The polypeptide is Imidazolonepropionase (Brucella suis (strain ATCC 23445 / NCTC 10510)).